The primary structure comprises 119 residues: MAKSSFKLDHTLERRQAEANRIREKYSDRIPVIVEKAERSDIPDIDKKKYLVPADLTVGQFVYVVRKRIKLSPEKAIFIFVKNTLPPTAALMSAIYEENKDEDGFLYMTYSGENTFGLL.

Gly117 carries Phosphatidylethanolamine amidated glycine lipidation. A propeptide spans 118 to 119 (LL) (removed in mature form).

This sequence belongs to the ATG8 family. As to quaternary structure, interacts with ATG4. The C-terminal 2 residues are removed by ATG4 to expose Gly-117 at the C-terminus. The C-terminal Gly is then amidated with phosphatidylethanolamine by an activating system similar to that for ubiquitin.

It is found in the cytoplasmic vesicle. The protein localises to the autophagosome membrane. The protein resides in the vacuole membrane. It localises to the cytoplasm. Its subcellular location is the cytoskeleton. Functionally, ubiquitin-like modifier involved in autophagosomes formation. May mediate the delivery of the autophagosomes to the vacuole via the microtubule cytoskeleton. In Oryza sativa subsp. indica (Rice), this protein is Autophagy-related protein 8B (ATG8B).